The chain runs to 292 residues: Elongation factor Ts (292 aa).

The segment at 79–82 (TDFV) is involved in Mg(2+) ion dislocation from EF-Tu.

It belongs to the EF-Ts family.

The protein resides in the cytoplasm. Associates with the EF-Tu.GDP complex and induces the exchange of GDP to GTP. It remains bound to the aminoacyl-tRNA.EF-Tu.GTP complex up to the GTP hydrolysis stage on the ribosome. The polypeptide is Elongation factor Ts (Metamycoplasma arthritidis (strain 158L3-1) (Mycoplasma arthritidis)).